Here is a 460-residue protein sequence, read N- to C-terminus: Argininosuccinate lyase (460 aa).

It belongs to the lyase 1 family. Argininosuccinate lyase subfamily.

It is found in the cytoplasm. The catalysed reaction is 2-(N(omega)-L-arginino)succinate = fumarate + L-arginine. The protein operates within amino-acid biosynthesis; L-arginine biosynthesis; L-arginine from L-ornithine and carbamoyl phosphate: step 3/3. The sequence is that of Argininosuccinate lyase from Lawsonia intracellularis (strain PHE/MN1-00).